The sequence spans 273 residues: Pantothenate synthetase (273 aa).

27–34 (MGALHQGH) provides a ligand contact to ATP. The active-site Proton donor is the histidine 34. Position 58 (glutamine 58) interacts with (R)-pantoate. Glutamine 58 serves as a coordination point for beta-alanine. 144 to 147 (GKKD) is a binding site for ATP. Glutamine 150 contacts (R)-pantoate. Residues valine 173 and 181–184 (LSSR) each bind ATP.

It belongs to the pantothenate synthetase family. In terms of assembly, homodimer.

The protein resides in the cytoplasm. It carries out the reaction (R)-pantoate + beta-alanine + ATP = (R)-pantothenate + AMP + diphosphate + H(+). The protein operates within cofactor biosynthesis; (R)-pantothenate biosynthesis; (R)-pantothenate from (R)-pantoate and beta-alanine: step 1/1. In terms of biological role, catalyzes the condensation of pantoate with beta-alanine in an ATP-dependent reaction via a pantoyl-adenylate intermediate. The protein is Pantothenate synthetase of Nitratiruptor sp. (strain SB155-2).